A 380-amino-acid chain; its full sequence is Gap junction gamma-1 protein (380 aa).

The Cytoplasmic portion of the chain corresponds to 1–22 (MSWSFLTRLLDEISNHSTFVGK). A helical membrane pass occupies residues 23–45 (IWLTLFIIFRIVLTVVGGESIYY). The Extracellular segment spans residues 46–75 (DEQSKFVCNTQQPGCENVCYDAFAPLSHVR). The helical transmembrane segment at 76 to 95 (FWVFQIILITTPTIMYLGFA) threads the bilayer. Residues 96–171 (MHKIARSNDV…RRIKRDGLMK (76 aa)) are Cytoplasmic-facing. The helical transmembrane segment at 172-194 (VYILQLLSRIIFEVGFLFGQYIL) threads the bilayer. Topologically, residues 195–228 (YGFEVAPSYVCTRSPCPHTVDCFVSRPTEKTIFL) are extracellular. Residues 229–251 (LIMYAVSCLCLSLTVLEILHLGL) form a helical membrane-spanning segment. Residues 252 to 380 (SGIRDAFRRR…GSKCEKGIHA (129 aa)) are Cytoplasmic-facing. The segment at 337-380 (AYQNGESSPSRSSSPESNGTAVEQNRLNFAQEKQGSKCEKGIHA) is disordered. Residues 342-353 (ESSPSRSSSPES) show a composition bias toward low complexity. A compositionally biased stretch (polar residues) spans 354–369 (NGTAVEQNRLNFAQEK). Residues 370–380 (QGSKCEKGIHA) show a composition bias toward basic and acidic residues.

Belongs to the connexin family. Gamma-type subfamily. In terms of assembly, a connexon is composed of a hexamer of connexins.

It localises to the cell membrane. The protein resides in the cell junction. It is found in the gap junction. In terms of biological role, one gap junction consists of a cluster of closely packed pairs of transmembrane channels, the connexons, through which materials of low MW diffuse from one cell to a neighboring cell. Participates in a developmental pathway for formation of the notochord and tail. The polypeptide is Gap junction gamma-1 protein (gjc1) (Danio rerio (Zebrafish)).